Reading from the N-terminus, the 125-residue chain is Fumarate reductase subunit D (125 aa).

3 helical membrane passes run 30–50 (FAML…LGVI), 62–82 (AFAT…LPMW), and 105–125 (VACY…IFMI).

Belongs to the FrdD family. In terms of assembly, part of an enzyme complex containing four subunits: a flavoprotein (FrdA), an iron-sulfur protein (FrdB), and two hydrophobic anchor proteins (FrdC and FrdD).

It localises to the cell inner membrane. Its function is as follows. Anchors the catalytic components of the fumarate reductase complex to the cell membrane, binds quinones. The chain is Fumarate reductase subunit D from Vibrio parahaemolyticus serotype O3:K6 (strain RIMD 2210633).